A 235-amino-acid polypeptide reads, in one-letter code: Aspartate/glutamate leucyltransferase (235 aa).

Belongs to the R-transferase family. Bpt subfamily.

The protein resides in the cytoplasm. It carries out the reaction N-terminal L-glutamyl-[protein] + L-leucyl-tRNA(Leu) = N-terminal L-leucyl-L-glutamyl-[protein] + tRNA(Leu) + H(+). It catalyses the reaction N-terminal L-aspartyl-[protein] + L-leucyl-tRNA(Leu) = N-terminal L-leucyl-L-aspartyl-[protein] + tRNA(Leu) + H(+). In terms of biological role, functions in the N-end rule pathway of protein degradation where it conjugates Leu from its aminoacyl-tRNA to the N-termini of proteins containing an N-terminal aspartate or glutamate. The protein is Aspartate/glutamate leucyltransferase of Pseudomonas paraeruginosa (strain DSM 24068 / PA7) (Pseudomonas aeruginosa (strain PA7)).